We begin with the raw amino-acid sequence, 240 residues long: Protein CDV3 homolog A (240 aa).

A compositionally biased stretch (basic and acidic residues) spans 1 to 15 (MAEPQEKSLDDFFAK). A disordered region spans residues 1-204 (MAEPQEKSLD…TESRREKEME (204 aa)). Alanine 2 is modified (N-acetylalanine). Over residues 27-52 (SGSAAGSRGSARPPDGAPSSSSSMSG) the composition is skewed to low complexity. The span at 57–73 (VKKEKSGKSDNPDQLQE) shows a compositional bias: basic and acidic residues. Polar residues-rich tracts occupy residues 127 to 141 (DKSS…QAQA) and 181 to 192 (SDTQFPSLQATA). The segment covering 193–204 (KHTESRREKEME) has biased composition (basic and acidic residues).

The protein belongs to the CDV3 family.

Its subcellular location is the cytoplasm. The sequence is that of Protein CDV3 homolog A (cdv3-a) from Xenopus laevis (African clawed frog).